The primary structure comprises 412 residues: Alpha-ketoglutarate-dependent sulfonate dioxygenase (412 aa).

Serine 52 bears the Phosphoserine mark. Residues histidine 218 and aspartate 220 each coordinate Fe cation. Residues threonine 245 and tryptophan 352 each contribute to the 2-oxoglutarate site. Position 367 (histidine 367) interacts with Fe cation. 2 residues coordinate 2-oxoglutarate: arginine 379 and arginine 383.

It belongs to the TfdA dioxygenase family. The cofactor is Fe(2+).

It functions in the pathway organosulfur degradation; alkanesulfonate degradation. Functionally, acts as an alpha-ketoglutarate-dependent dioxygenase active on sulfonates. Although taurine is a poor substrate, a variety of other sulfonates are utilized, with the best natural substrates being isethionate and taurocholate. This is Alpha-ketoglutarate-dependent sulfonate dioxygenase (JLP1) from Saccharomyces cerevisiae (strain ATCC 204508 / S288c) (Baker's yeast).